Reading from the N-terminus, the 514-residue chain is Alstonine synthase (514 aa).

The chain crosses the membrane as a helical span at residues 4–24 (PQFSCLLPAFFLLVVFLFLLI). Asn428 carries an N-linked (GlcNAc...) asparagine glycan. Cys450 contributes to the heme binding site.

This sequence belongs to the cytochrome P450 family. The cofactor is heme.

The protein resides in the membrane. The catalysed reaction is tetrahydroalstonine + A + reduced [NADPH--hemoprotein reductase] + O2 = alstonine + AH2 + oxidized [NADPH--hemoprotein reductase] + 2 H2O + H(+). The protein operates within alkaloid biosynthesis. In terms of biological role, a cytochrome P450 monooxygenase involved in the biosynthesis of pentacyclic alkaloids natural products such as alstonine, putative antipsychotic compounds. Catalyzes the conversion of tetrahydroalstonine to alstonine. No oxidative activity towards ajmalicine. The sequence is that of Alstonine synthase from Alstonia scholaris (Dogbane).